The sequence spans 239 residues: Ribose-5-phosphate isomerase A (239 aa).

Substrate contacts are provided by residues 31–34, 88–91, and 101–104; these read FGST, DGAD, and KGGG. Glutamate 110 acts as the Proton acceptor in catalysis. Lysine 128 provides a ligand contact to substrate.

This sequence belongs to the ribose 5-phosphate isomerase family. Homodimer.

The catalysed reaction is aldehydo-D-ribose 5-phosphate = D-ribulose 5-phosphate. It participates in carbohydrate degradation; pentose phosphate pathway; D-ribose 5-phosphate from D-ribulose 5-phosphate (non-oxidative stage): step 1/1. Functionally, catalyzes the reversible conversion of ribose-5-phosphate to ribulose 5-phosphate. This chain is Ribose-5-phosphate isomerase A, found in Chloroflexus aurantiacus (strain ATCC 29366 / DSM 635 / J-10-fl).